Consider the following 194-residue polypeptide: RxLR effector protein Avh240 (194 aa).

The N-terminal stretch at Met-1 to Ala-23 is a signal peptide. The RxLR-dEER motif lies at Arg-38–Arg-57. Residues Leu-58–Ser-108 form a host plasma membrane-binding region.

This sequence belongs to the RxLR effector family. Homodimer. Interacts with host soybean aspartic protease AP1.

The protein resides in the secreted. It is found in the host cell membrane. Its function is as follows. Effector that suppresses plant defense responses during the early stages of pathogen infection. Suppresses cell death induced by effectors and PAMPs in plant hosts. Avh240 dimerizes and localizes at the plasma membrane to interfere with aspartic protease AP1 secretion, which presents an effective mechanism by which effector proteins suppress plant apoplastic immunity. In Phytophthora sojae (Soybean stem and root rot agent), this protein is RxLR effector protein Avh240.